The primary structure comprises 286 residues: Nucleotide-binding protein PSPA7_5038 (286 aa).

Glycine 8 to serine 15 provides a ligand contact to ATP. Aspartate 60–asparagine 63 provides a ligand contact to GTP.

It belongs to the RapZ-like family.

Functionally, displays ATPase and GTPase activities. This Pseudomonas paraeruginosa (strain DSM 24068 / PA7) (Pseudomonas aeruginosa (strain PA7)) protein is Nucleotide-binding protein PSPA7_5038.